Reading from the N-terminus, the 401-residue chain is Voltage-gated potassium channel subunit beta-1 (401 aa).

Residues T90, W91, Q97, and D119 each contribute to the NADP(+) site. The Proton donor/acceptor role is filled by Y124. The NADP(+) site is built by N192, S222, R223, Q248, W277, S278, P279, L280, A281, C282, K288, R298, G357, S359, Q363, E366, and N367.

Belongs to the shaker potassium channel beta subunit family. In terms of assembly, homotetramer. Interaction with tetrameric potassium channel alpha subunits gives rise to a heterooctamer.

The protein localises to the cytoplasm. The protein resides in the membrane. It is found in the cell membrane. The catalysed reaction is a primary alcohol + NADP(+) = an aldehyde + NADPH + H(+). It catalyses the reaction a secondary alcohol + NADP(+) = a ketone + NADPH + H(+). In terms of biological role, regulatory subunit of the voltage-gated potassium (Kv) channels composed of pore-forming and potassium-conducting alpha subunits and of regulatory beta subunits. The beta-1/KCNAB1 cytoplasmic subunit mediates closure of delayed rectifier potassium channels by physically obstructing the pore via its N-terminal domain and increases the speed of channel closure for other family members. Promotes the inactivation of KCNA1, KCNA2, KCNA4, KCNA5 and KCNA6 alpha subunit-containing channels. Displays nicotinamide adenine dinucleotide phosphate (NADPH)-dependent aldoketoreductase activity by catalyzing the NADPH-dependent reduction of a variety of endogenous aldehydes and ketones. The binding of NADPH is required for efficient down-regulation of potassium channel activity. Oxidation of the bound NADPH restrains N-terminal domain from blocking the channel, thereby decreasing N-type inactivation of potassium channel activity. In Gallus gallus (Chicken), this protein is Voltage-gated potassium channel subunit beta-1 (KCNAB1).